The sequence spans 457 residues: Argininosuccinate lyase (457 aa).

The protein belongs to the lyase 1 family. Argininosuccinate lyase subfamily.

Its subcellular location is the cytoplasm. It catalyses the reaction 2-(N(omega)-L-arginino)succinate = fumarate + L-arginine. Its pathway is amino-acid biosynthesis; L-arginine biosynthesis; L-arginine from L-ornithine and carbamoyl phosphate: step 3/3. The protein is Argininosuccinate lyase of Serratia proteamaculans (strain 568).